Reading from the N-terminus, the 212-residue chain is Ribosomal RNA small subunit methyltransferase G (212 aa).

Residues G80, L85, 131–132 (AE), and R146 each bind S-adenosyl-L-methionine.

This sequence belongs to the methyltransferase superfamily. RNA methyltransferase RsmG family.

It localises to the cytoplasm. The enzyme catalyses guanosine(527) in 16S rRNA + S-adenosyl-L-methionine = N(7)-methylguanosine(527) in 16S rRNA + S-adenosyl-L-homocysteine. In terms of biological role, specifically methylates the N7 position of guanine in position 527 of 16S rRNA. The protein is Ribosomal RNA small subunit methyltransferase G of Xanthomonas axonopodis pv. citri (strain 306).